Reading from the N-terminus, the 132-residue chain is Large ribosomal subunit protein uL14 (132 aa).

Belongs to the universal ribosomal protein uL14 family. Part of the 50S ribosomal subunit. Forms a cluster with proteins L3 and L24e, part of which may contact the 16S rRNA in 2 intersubunit bridges.

Functionally, binds to 23S rRNA. Forms part of two intersubunit bridges in the 70S ribosome. This is Large ribosomal subunit protein uL14 from Methanosphaera stadtmanae (strain ATCC 43021 / DSM 3091 / JCM 11832 / MCB-3).